Reading from the N-terminus, the 176-residue chain is dCTP deaminase (176 aa).

DCTP contacts are provided by residues 99 to 104 (RSTLAR) and Asp115. The active-site Proton donor/acceptor is the Glu125. Gln163 serves as a coordination point for dCTP.

Belongs to the dCTP deaminase family. As to quaternary structure, homotrimer.

The enzyme catalyses dCTP + H2O + H(+) = dUTP + NH4(+). It participates in pyrimidine metabolism; dUMP biosynthesis; dUMP from dCTP (dUTP route): step 1/2. Catalyzes the deamination of dCTP to dUTP. This Pyrobaculum neutrophilum (strain DSM 2338 / JCM 9278 / NBRC 100436 / V24Sta) (Thermoproteus neutrophilus) protein is dCTP deaminase.